Here is a 198-residue protein sequence, read N- to C-terminus: Imidazoleglycerol-phosphate dehydratase (198 aa).

The protein belongs to the imidazoleglycerol-phosphate dehydratase family.

Its subcellular location is the cytoplasm. It catalyses the reaction D-erythro-1-(imidazol-4-yl)glycerol 3-phosphate = 3-(imidazol-4-yl)-2-oxopropyl phosphate + H2O. It functions in the pathway amino-acid biosynthesis; L-histidine biosynthesis; L-histidine from 5-phospho-alpha-D-ribose 1-diphosphate: step 6/9. In Gluconobacter oxydans (strain 621H) (Gluconobacter suboxydans), this protein is Imidazoleglycerol-phosphate dehydratase.